Reading from the N-terminus, the 59-residue chain is Large ribosomal subunit protein bL32 (59 aa).

The tract at residues 1–21 (MAVPKKKSSKSKGRSRAAHHA) is disordered.

It belongs to the bacterial ribosomal protein bL32 family.

This is Large ribosomal subunit protein bL32 from Magnetococcus marinus (strain ATCC BAA-1437 / JCM 17883 / MC-1).